The chain runs to 396 residues: Phosphoglycerate kinase (396 aa).

Residues 21-23 (DFN), Arg36, 59-62 (HLGK), Arg119, and Arg156 contribute to the substrate site. Residues Lys206, Glu325, and 352 to 355 (GGDS) contribute to the ATP site.

The protein belongs to the phosphoglycerate kinase family. Monomer.

The protein resides in the cytoplasm. It carries out the reaction (2R)-3-phosphoglycerate + ATP = (2R)-3-phospho-glyceroyl phosphate + ADP. It functions in the pathway carbohydrate degradation; glycolysis; pyruvate from D-glyceraldehyde 3-phosphate: step 2/5. This is Phosphoglycerate kinase from Staphylococcus haemolyticus (strain JCSC1435).